The following is an 85-amino-acid chain: Large ribosomal subunit protein bL27 (85 aa).

A disordered region spans residues 1–24; that stretch reads MAHKKAGGSSRNGRDSNSKRLGVK.

This sequence belongs to the bacterial ribosomal protein bL27 family.

This Nitrosospira multiformis (strain ATCC 25196 / NCIMB 11849 / C 71) protein is Large ribosomal subunit protein bL27.